Here is a 126-residue protein sequence, read N- to C-terminus: MSYKPIAPAPSSTPGSSTPGPGTPVPTGSVPSPSGSVPGAGAPFRPLFNDFGPPSMGYVQAMKPPGAQGSQSTYTDLLSVIEEMGKEIRPTYAGSKSAMERLKRGIIHARALVRECLAETERNART.

The interval Met-1 to Phe-48 is disordered. Low complexity predominate over residues Ala-9 to Pro-43. Positions Pro-64–Ile-106 are interaction with CDK2.

The protein belongs to the CDK2AP family. As to quaternary structure, component of the nucleosome remodeling and deacetylase (NuRD) repressor complex, composed of core proteins MTA1, MTA2, MTA3, RBBP4, RBBP7, HDAC1, HDAC2, MBD2, MBD3, and peripherally associated proteins CDK2AP1, CDK2AP2, GATAD2A, GATAD2B, CHD3, CHD4 and CHD5. The exact stoichiometry of the NuRD complex is unknown, and some subunits such as MBD2 and MBD3, GATAD2A and GATAD2B, and CHD3, CHD4 and CHD5 define mutually exclusive NuRD complexes. Interacts with CDK2AP1. Interacts with CDK2. Interacts with MAPK1. Post-translationally, phosphorylated by MAPK1 and CDK2. In terms of tissue distribution, ubiquitous.

It is found in the cytoplasm. The protein resides in the nucleus. Its function is as follows. Acts as a component of the histone deacetylase NuRD complex which participates in the remodeling of chromatin. Inhibits cell cycle G1/S phase transition by repressing CDK2 expression and activation; represses CDK2 activation by inhibiting its interaction with cyclin E and A. Plays a role in regulating the self-renewal of embryonic stem cells (ESCs) and in maintaining cell survival during terminal differentiation of ESCs. Regulates microtubule organization of metaphase II oocytes. The polypeptide is Cyclin-dependent kinase 2-associated protein 2 (CDK2AP2) (Homo sapiens (Human)).